Here is a 114-residue protein sequence, read N- to C-terminus: T cell receptor beta variable 5-1 (114 aa).

The first 21 residues, 1-21 (MGSRLLCWVLLCLLGAGPVKA), serve as a signal peptide directing secretion. Residues 22 to 114 (GVTQTPRYLI…SALYLCASSL (93 aa)) enclose the Ig-like domain. C42 and C110 are oxidised to a cystine. N-linked (GlcNAc...) asparagine glycosylation is present at N96.

Alpha-beta TR is a heterodimer composed of an alpha and beta chain; disulfide-linked. The alpha-beta TR is associated with the transmembrane signaling CD3 coreceptor proteins to form the TR-CD3 (TcR or TCR). The assembly of alpha-beta TR heterodimers with CD3 occurs in the endoplasmic reticulum where a single alpha-beta TR heterodimer associates with one CD3D-CD3E heterodimer, one CD3G-CD3E heterodimer and one CD247 homodimer forming a stable octameric structure. CD3D-CD3E and CD3G-CD3E heterodimers preferentially associate with TR alpha and TR beta chains, respectively. The association of the CD247 homodimer is the last step of TcR assembly in the endoplasmic reticulum and is required for transport to the cell surface.

The protein resides in the cell membrane. V region of the variable domain of T cell receptor (TR) beta chain that participates in the antigen recognition. Alpha-beta T cell receptors are antigen specific receptors which are essential to the immune response and are present on the cell surface of T lymphocytes. Recognize peptide-major histocompatibility (MH) (pMH) complexes that are displayed by antigen presenting cells (APC), a prerequisite for efficient T cell adaptive immunity against pathogens. Binding of alpha-beta TR to pMH complex initiates TR-CD3 clustering on the cell surface and intracellular activation of LCK that phosphorylates the ITAM motifs of CD3G, CD3D, CD3E and CD247 enabling the recruitment of ZAP70. In turn ZAP70 phosphorylates LAT, which recruits numerous signaling molecules to form the LAT signalosome. The LAT signalosome propagates signal branching to three major signaling pathways, the calcium, the mitogen-activated protein kinase (MAPK) kinase and the nuclear factor NF-kappa-B (NF-kB) pathways, leading to the mobilization of transcription factors that are critical for gene expression and essential for T cell growth and differentiation. The T cell repertoire is generated in the thymus, by V-(D)-J rearrangement. This repertoire is then shaped by intrathymic selection events to generate a peripheral T cell pool of self-MH restricted, non-autoaggressive T cells. Post-thymic interaction of alpha-beta TR with the pMH complexes shapes TR structural and functional avidity. The sequence is that of T cell receptor beta variable 5-1 from Homo sapiens (Human).